A 577-amino-acid polypeptide reads, in one-letter code: Urease subunit alpha (577 aa).

The region spanning 136–577 (GAIDCHVHLI…LPMAQRYFLF (442 aa)) is the Urease domain. Ni(2+) is bound by residues His-141, His-143, and Lys-224. Position 224 is an N6-carboxylysine (Lys-224). Position 226 (His-226) interacts with substrate. 2 residues coordinate Ni(2+): His-253 and His-279. His-327 functions as the Proton donor in the catalytic mechanism. Ni(2+) is bound at residue Asp-367.

It belongs to the metallo-dependent hydrolases superfamily. Urease alpha subunit family. In terms of assembly, heterotrimer of UreA (gamma), UreB (beta) and UreC (alpha) subunits. Three heterotrimers associate to form the active enzyme. Ni cation is required as a cofactor. Carboxylation allows a single lysine to coordinate two nickel ions.

It localises to the cytoplasm. It carries out the reaction urea + 2 H2O + H(+) = hydrogencarbonate + 2 NH4(+). It functions in the pathway nitrogen metabolism; urea degradation; CO(2) and NH(3) from urea (urease route): step 1/1. The chain is Urease subunit alpha from Mycobacterium ulcerans (strain Agy99).